A 112-amino-acid polypeptide reads, in one-letter code: Protein FAM32A (112 aa).

The disordered stretch occupies residues 23–56; sequence TKRKKKKKDKDKAKMLEAMGTSKKSEEEKRRCLD. Basic and acidic residues predominate over residues 45–56; sequence KKSEEEKRRCLD.

This sequence belongs to the FAM32 family. As to expression, widely expressed, with highest level in pancreas and lowest in muscle.

It localises to the nucleus. May induce G2 arrest and apoptosis. May also increase cell sensitivity to apoptotic stimuli. In cell lines, may play a role in the inhibition of anchor-independent cell growth. The protein is Protein FAM32A (Fam32a) of Mus musculus (Mouse).